We begin with the raw amino-acid sequence, 98 residues long: NADH-ubiquinone oxidoreductase chain 4L (98 aa).

Helical transmembrane passes span 1-21 (MIPT…GMLT), 27-47 (VASL…TTLI), and 61-81 (IILL…LISI).

It belongs to the complex I subunit 4L family. As to quaternary structure, core subunit of respiratory chain NADH dehydrogenase (Complex I) which is composed of 45 different subunits.

The protein resides in the mitochondrion inner membrane. The enzyme catalyses a ubiquinone + NADH + 5 H(+)(in) = a ubiquinol + NAD(+) + 4 H(+)(out). In terms of biological role, core subunit of the mitochondrial membrane respiratory chain NADH dehydrogenase (Complex I) which catalyzes electron transfer from NADH through the respiratory chain, using ubiquinone as an electron acceptor. Part of the enzyme membrane arm which is embedded in the lipid bilayer and involved in proton translocation. The polypeptide is NADH-ubiquinone oxidoreductase chain 4L (MT-ND4L) (Macaca nigra (Celebes black macaque)).